Here is a 480-residue protein sequence, read N- to C-terminus: MSRYFSFFFLALFLHYRIIVASPFEGFDAEEDDVTDDSSHLLHHSLPPPLLTQSHSSLSDPDPEPEPSSAECKSDLITESDLEHQSDSKTPSSTPFEYWDEDEFEGLPVEIETLESPLITENGTHADPKTPDLKTSSEAQGDTNDQTKKKKSYAVEIACVCFLIALAINYFVGKRENESLALAWAAKFASKDTIFQKNFSMLGVSELEDSPLLLKEALNVFKFYASGRRYCHGLLATMELKSRHDLISRVFNLVVPCKDEITFEVYMNEETMDHVVFAMTKKKAAKTMQKEMRDLQRFAGIVSPPAGRKWVSEEFALISESKEVAADLITDTVLDQVFGDKAVDKYGKNFMSMHISDQHPGKHKKMMLFKFSLPDAKHMDDIVRLVALIPYYIDLVGRYRLSSQARNKTESGRQKAAEEAYKELHNARQEALQKKKAEKKKMMEEAEAKMSAEVIRKKEAKERARQVKKAVPKMKMSRSH.

The first 21 residues, 1–21 (MSRYFSFFFLALFLHYRIIVA), serve as a signal peptide directing secretion. 2 disordered regions span residues 38–72 (SSHL…SAEC) and 116–147 (SPLI…NDQT). Over residues 51–60 (LTQSHSSLSD) the composition is skewed to low complexity. Residues 133–144 (LKTSSEAQGDTN) show a composition bias toward polar residues. The helical transmembrane segment at 153–173 (YAVEIACVCFLIALAINYFVG) threads the bilayer. The disordered stretch occupies residues 404 to 480 (QARNKTESGR…VPKMKMSRSH (77 aa)). A compositionally biased stretch (basic and acidic residues) spans 407-465 (NKTESGRQKAAEEAYKELHNARQEALQKKKAEKKKMMEEAEAKMSAEVIRKKEAKERAR). A coiled-coil region spans residues 411-467 (SGRQKAAEEAYKELHNARQEALQKKKAEKKKMMEEAEAKMSAEVIRKKEAKERARQV). Residues 466 to 480 (QVKKAVPKMKMSRSH) show a composition bias toward basic residues.

It is found in the membrane. This is an uncharacterized protein from Arabidopsis thaliana (Mouse-ear cress).